Here is a 472-residue protein sequence, read N- to C-terminus: Envelope glycoprotein O (472 aa).

A signal peptide spans 1 to 31 (MGKKEMIMVKGIPKIMLLISITFLLLSLINC). N-linked (GlcNAc...) asparagine; by host glycans are attached at residues N109, N136, N163, N168, N177, N225, N248, N294, N298, N356, N391, N398, N405, N439, and N460.

Belongs to the herpesviridae U47 family. In terms of assembly, forms the envelope trimer complex composed of gH, gL, and gO. The trimer interacts with host PDGFRA. N-glycosylated. In terms of processing, the N-terminus is blocked.

It is found in the virion membrane. Plays a role in viral entry into host cells. Forms a trimeric complex at the surface of the viral envelope together with gH and gL. This complex is required for entry in host fibroblasts. Mechanistically, engages host receptor(s) including PDGFRA to mediate infection. This is Envelope glycoprotein O (UL74) from Human cytomegalovirus (strain Merlin) (HHV-5).